A 465-amino-acid chain; its full sequence is UDP-N-acetylmuramate--L-alanine ligase (465 aa).

114-120 (GAHGKTT) serves as a coordination point for ATP.

Belongs to the MurCDEF family.

Its subcellular location is the cytoplasm. It catalyses the reaction UDP-N-acetyl-alpha-D-muramate + L-alanine + ATP = UDP-N-acetyl-alpha-D-muramoyl-L-alanine + ADP + phosphate + H(+). It participates in cell wall biogenesis; peptidoglycan biosynthesis. In terms of biological role, cell wall formation. The sequence is that of UDP-N-acetylmuramate--L-alanine ligase from Syntrophomonas wolfei subsp. wolfei (strain DSM 2245B / Goettingen).